The chain runs to 218 residues: Probable transaldolase 2 (218 aa).

The active-site Schiff-base intermediate with substrate is Lys83.

Belongs to the transaldolase family. Type 3B subfamily.

It localises to the cytoplasm. The catalysed reaction is D-sedoheptulose 7-phosphate + D-glyceraldehyde 3-phosphate = D-erythrose 4-phosphate + beta-D-fructose 6-phosphate. It participates in carbohydrate degradation; pentose phosphate pathway; D-glyceraldehyde 3-phosphate and beta-D-fructose 6-phosphate from D-ribose 5-phosphate and D-xylulose 5-phosphate (non-oxidative stage): step 2/3. Functionally, transaldolase is important for the balance of metabolites in the pentose-phosphate pathway. This chain is Probable transaldolase 2, found in Listeria innocua serovar 6a (strain ATCC BAA-680 / CLIP 11262).